A 436-amino-acid polypeptide reads, in one-letter code: Two-pore potassium channel 3 (436 aa).

Topologically, residues 1-148 (MANEGSDPLL…QKDPTETSRS (148 aa)) are cytoplasmic. The segment at 62-117 (SHFIDSMKQPSPSSSSTAVNNPFSDSSTLDPLLPPPPPQPEPWLSDQTSSHCQGHA) is disordered. The span at 71–92 (PSPSSSSTAVNNPFSDSSTLDP) shows a compositional bias: low complexity. Pro residues predominate over residues 93–102 (LLPPPPPQPE). A helical membrane pass occupies residues 149-169 (VVRQAFALLVVYLSLGVLIYW). Residues 185–204 (DGLYFCIVTMCTIGYGDITP) constitute an intramembrane region (pore-forming). Residues 212–232 (FSIMFVLVGFGFIDILLSGMV) traverse the membrane as a helical segment. The Cytoplasmic segment spans residues 233 to 274 (SYVLDLQESYMLDSAKRRDEPEKRRSYIIDVKKGRMRIRLKV). Residues 275–295 (ALALGVVVLCIAVGVGIMHFI) form a helical membrane-spanning segment. The pore-forming intramembrane region spans 302-321 (DSFYLSVMSVTTVGYGDRAF). A helical transmembrane segment spans residues 328-348 (LFAAIWLLVSTLAVARAFLYL). The Cytoplasmic portion of the chain corresponds to 349 to 436 (AEARVDKRNR…LDLLEGGSGD (88 aa)). EF-hand domains follow at residues 365–400 (LCETMSVSQFFAADIDNNGCVSKAEYVIYKLKEMEK) and 404–436 (KDILPISKQFDKLDRCSNGKITLLDLLEGGSGD). Asp378, Asp380, Asn382, Cys384, Glu389, Asp417, Asn421, Lys423, and Asp428 together coordinate Ca(2+).

This sequence belongs to the two pore domain potassium channel (TC 1.A.1.7) family. Homodimer. As to expression, expressed in roots, cotyledons, stems, hypocotyls, leaves and flowers. Detected in root tips and in mesophyll cells and guard cells of the leaves.

The protein localises to the vacuole membrane. The protein resides in the plastid. It is found in the chloroplast thylakoid membrane. With respect to regulation, inhibited by barium, but not by tetraethylammonium. Two-pore potassium channel modulating the proton motive force (pmf) necessary to convert photochemical energy into physiological functions. Mediates the potassium efflux from the thylakoid lumen required for the regulation of the transmembrane electrical potential, the enhancement of the pH gradient for ATP synthesis, the regulation of electron flow, and pH-mediated photoprotective responses. Requires calcium for channel activity. The protein is Two-pore potassium channel 3 of Arabidopsis thaliana (Mouse-ear cress).